A 430-amino-acid chain; its full sequence is UDP-N-acetylglucosamine 1-carboxyvinyltransferase (430 aa).

Position 22 to 23 (22 to 23) interacts with phosphoenolpyruvate; that stretch reads KN. Residue arginine 102 participates in UDP-N-acetyl-alpha-D-glucosamine binding. The active-site Proton donor is cysteine 126. At cysteine 126 the chain carries 2-(S-cysteinyl)pyruvic acid O-phosphothioketal. Residues 131–135, 172–175, aspartate 317, and isoleucine 339 each bind UDP-N-acetyl-alpha-D-glucosamine; these read RPVDL and KVSV.

It belongs to the EPSP synthase family. MurA subfamily.

It is found in the cytoplasm. The enzyme catalyses phosphoenolpyruvate + UDP-N-acetyl-alpha-D-glucosamine = UDP-N-acetyl-3-O-(1-carboxyvinyl)-alpha-D-glucosamine + phosphate. The protein operates within cell wall biogenesis; peptidoglycan biosynthesis. In terms of biological role, cell wall formation. Adds enolpyruvyl to UDP-N-acetylglucosamine. The polypeptide is UDP-N-acetylglucosamine 1-carboxyvinyltransferase (Rhizobium etli (strain ATCC 51251 / DSM 11541 / JCM 21823 / NBRC 15573 / CFN 42)).